Here is a 3159-residue protein sequence, read N- to C-terminus: E1A-binding protein p400 (3159 aa).

Residues 1-16 (MHHGTGPQNVQHQLQR) are compositionally biased toward polar residues. Disordered stretches follow at residues 1–65 (MHHG…MNRS), 125–154 (SPLS…RAGA), 212–261 (PGTP…HITT), 282–359 (VLQG…PASP), 545–594 (LMPT…PQLP), 633–658 (QQPN…AQLA), and 684–770 (TRLP…SQDT). The segment covering 31-41 (HPNPPPSPAAP) has biased composition (pro residues). The span at 42–55 (FAPSASPSAPQSPS) shows a compositional bias: low complexity. Ser53 carries the phosphoserine modification. Positions 56 to 65 (YQIQQLMNRS) are enriched in polar residues. 2 stretches are compositionally biased toward low complexity: residues 125–137 (SPLS…QSPT) and 237–256 (LGPQ…LASP). At Ser135 the chain carries Phosphoserine. 2 positions are modified to phosphoserine: Ser315 and Ser321. Residues 558 to 571 (QAAQLAGQRQSQQQ) show a composition bias toward low complexity. Positions 572–585 (YDPSTGPPVQNAAS) are enriched in polar residues. Composition is skewed to pro residues over residues 637–653 (VPIP…PPSQ) and 689–698 (DPAPPCPRPL). The span at 699-711 (PTSSTSSLAPVSG) shows a compositional bias: low complexity. 2 stretches are compositionally biased toward polar residues: residues 725–742 (NRPS…TSRT) and 751–760 (TKPQSPAQNA). 2 positions are modified to phosphoserine: Ser736 and Ser755. Residues 761-770 (TSSQDSSQDT) are compositionally biased toward low complexity. One can recognise an HSA domain in the interval 799-871 (LPKLQEAPRP…EQSRLRRIAA (73 aa)). Disordered regions lie at residues 915–967 (ELRP…GVVD) and 997–1024 (SSQW…GDRE). 2 positions are modified to phosphoserine: Ser928 and Ser941. Residue Thr945 is modified to Phosphothreonine. 2 stretches are compositionally biased toward acidic residues: residues 945–962 (TDDE…EEAN) and 1008–1019 (EDTSGEEDADDC). An interactions with RUVBL1 and RUVBL2 region spans residues 951-1365 (DEEETIEEEE…NVLSILVRLQ (415 aa)). Ser1011 bears the Phosphoserine mark. One can recognise a Helicase ATP-binding domain in the interval 1103 to 1268 (AKLYRKNLNG…WTMVHFLVPG (166 aa)). 1116–1123 (DEAGLGKT) lines the ATP pocket. The DEAH box-like motif lies at 1219–1222 (DEMQ). The segment at 1467 to 1582 (VQYGQKPEGR…QAPSHAAGQS (116 aa)) is disordered. Position 1472 is an N6-acetyllysine (Lys1472). Composition is skewed to low complexity over residues 1481–1498 (PSTH…SAAP) and 1538–1565 (PASA…ASTP). 3 positions are modified to phosphoserine: Ser1547, Ser1728, and Ser1732. Positions 1787 to 1807 (GSLDGRRGKEAGPAHSYTSSS) are disordered. Residues 1789–1798 (LDGRRGKEAG) are compositionally biased toward basic and acidic residues. Positions 1899-2056 (KLEALAILLQ…GNDYSMAFLT (158 aa)) constitute a Helicase C-terminal domain. 2 disordered regions span residues 2119–2144 (KSAQ…PCDE) and 2287–2311 (KERK…GEAV). An N6-acetyllysine mark is found at Lys2349 and Lys2356. The Myb-like domain occupies 2360 to 2429 (EPGQDNPEWL…QCRNRYENVI (70 aa)). Disordered stretches follow at residues 2524-2602 (KEKK…AQPA) and 2665-2688 (TPGG…GSPA). Positions 2524–2789 (KEKKALADQQ…QQQQQTTTTS (266 aa)) are interaction with ZNF42. Residues 2530–2540 (ADQQKAQQPAV) show a composition bias toward low complexity. 2 stretches are compositionally biased toward pro residues: residues 2541–2563 (AQPP…PLPQ) and 2572–2589 (PAGP…PQTQ). Residues 2590–2602 (PQPVQAPAKAQPA) show a composition bias toward low complexity. Ser2686 carries the phosphoserine modification. Thr2813 bears the Phosphothreonine mark. Disordered regions lie at residues 2821-2869 (QKQK…TAPR) and 3115-3159 (APLQ…PPCQ). Residues 2828–2843 (PPQPPPPQAQSAPPQP) show a composition bias toward pro residues. The segment covering 2844–2866 (TAQVQVQTSQPPQQQSPQLTTVT) has biased composition (low complexity). Positions 3129-3140 (PASSDSPSQQPK) are enriched in polar residues.

Belongs to the SNF2/RAD54 helicase family. SWR1 subfamily. As to quaternary structure, component of the NuA4 histone acetyltransferase complex which contains the catalytic subunit KAT5/TIP60 and the subunits EP400, TRRAP/PAF400, BRD8/SMAP, EPC1, DMAP1/DNMAP1, RUVBL1/TIP49, RUVBL2, ING3, actin, ACTL6A/BAF53A, MORF4L1/MRG15, MORF4L2/MRGX, MRGBP, YEATS4/GAS41, VPS72/YL1 and MEAF6. May also participate in the formation of NuA4 related complexes which lack the KAT5/TIP60 catalytic subunit, but which include the SWI/SNF related protein SRCAP. The NuA4 complex interacts with MYC and the adenovirus E1A protein. EP400 interacts with TRRAP, RUVBL1 and RUVBL2. Component of a SWR1-like complex. Interacts with ZNF42. Interacts with PHF5A. Interacts with human cytomegalovirus UL27. Interacts with human adenovirus 5 E1A protein; this interaction stabilizes MYC. In terms of tissue distribution, ubiquitously expressed.

The protein localises to the nucleus. Its function is as follows. Component of the NuA4 histone acetyltransferase complex which is involved in transcriptional activation of select genes principally by acetylation of nucleosomal histones H4 and H2A. This modification may both alter nucleosome - DNA interactions and promote interaction of the modified histones with other proteins which positively regulate transcription. May be required for transcriptional activation of E2F1 and MYC target genes during cellular proliferation. The NuA4 complex ATPase and helicase activities seem to be, at least in part, contributed by the association of RUVBL1 and RUVBL2 with EP400. May regulate ZNF42 transcription activity. Component of a SWR1-like complex that specifically mediates the removal of histone H2A.Z/H2AZ1 from the nucleosome. This Homo sapiens (Human) protein is E1A-binding protein p400 (EP400).